A 233-amino-acid polypeptide reads, in one-letter code: GSK-3-binding protein FRAT2 (233 aa).

The interval 1-24 is disordered; sequence MPCRREEEEEAGEEAEGEEEEDDS. The span at 7 to 24 shows a compositional bias: acidic residues; sequence EEEEAGEEAEGEEEEDDS. An involved in GSK-3 binding region spans residues 174–196; the sequence is DPHRLLQQLVLSGNLIKEAVRRL. Residues 204–233 are disordered; sequence AATGPASAPGPGGGRSGPDRIALQPSGSLL.

The protein belongs to the GSK-3-binding protein family. Binds GSK-3 and prevents GSK-3-dependent phosphorylation.

In terms of biological role, positively regulates the Wnt signaling pathway by stabilizing beta-catenin through the association with GSK-3. This Homo sapiens (Human) protein is GSK-3-binding protein FRAT2 (FRAT2).